We begin with the raw amino-acid sequence, 259 residues long: MTRLQNAFSKPHAAFVAFITAGDGDTAANLDALVAGGADVIELGMPFTDPMADGPAIQAANIRSLARGTTTRDVLMIANEFRERHPEVPLVLMGYANPMVRRGPEWFAAECKGCGVDGVICVDIPPEEDAELGPALRAAGIAPIRLATPTTDAKRLPAVLEGCEGFVYYVSVAGITGKQQAALDTIESNVARIKRSTDLPVAVGFGVRTPEQAGAIARVADGVVVGSALVELVGEFGTEAPAKLQELTKALADAVHSAR.

Active-site proton acceptor residues include Glu-42 and Asp-53.

It belongs to the TrpA family. As to quaternary structure, tetramer of two alpha and two beta chains.

It catalyses the reaction (1S,2R)-1-C-(indol-3-yl)glycerol 3-phosphate + L-serine = D-glyceraldehyde 3-phosphate + L-tryptophan + H2O. Its pathway is amino-acid biosynthesis; L-tryptophan biosynthesis; L-tryptophan from chorismate: step 5/5. In terms of biological role, the alpha subunit is responsible for the aldol cleavage of indoleglycerol phosphate to indole and glyceraldehyde 3-phosphate. The sequence is that of Tryptophan synthase alpha chain from Erythrobacter litoralis (strain HTCC2594).